We begin with the raw amino-acid sequence, 142 residues long: Large ribosomal subunit protein uL13 (142 aa).

The protein belongs to the universal ribosomal protein uL13 family. Part of the 50S ribosomal subunit.

In terms of biological role, this protein is one of the early assembly proteins of the 50S ribosomal subunit, although it is not seen to bind rRNA by itself. It is important during the early stages of 50S assembly. The polypeptide is Large ribosomal subunit protein uL13 (Xylella fastidiosa (strain M23)).